Here is a 140-residue protein sequence, read N- to C-terminus: Chorion class A protein Ld2/Ld41 (140 aa).

An N-terminal signal peptide occupies residues 1–21 (MNSFAFLLVCIQACLVQSVFS).

Belongs to the chorion protein family.

This protein is one of many from the eggshell of the gypsy moth. This is Chorion class A protein Ld2/Ld41 from Lymantria dispar (Gypsy moth).